Reading from the N-terminus, the 372-residue chain is 4-hydroxy-3-methylbut-2-en-1-yl diphosphate synthase (flavodoxin) (372 aa).

Residues Cys-270, Cys-273, Cys-305, and Glu-312 each contribute to the [4Fe-4S] cluster site.

This sequence belongs to the IspG family. [4Fe-4S] cluster is required as a cofactor.

It catalyses the reaction (2E)-4-hydroxy-3-methylbut-2-enyl diphosphate + oxidized [flavodoxin] + H2O + 2 H(+) = 2-C-methyl-D-erythritol 2,4-cyclic diphosphate + reduced [flavodoxin]. Its pathway is isoprenoid biosynthesis; isopentenyl diphosphate biosynthesis via DXP pathway; isopentenyl diphosphate from 1-deoxy-D-xylulose 5-phosphate: step 5/6. Converts 2C-methyl-D-erythritol 2,4-cyclodiphosphate (ME-2,4cPP) into 1-hydroxy-2-methyl-2-(E)-butenyl 4-diphosphate. The chain is 4-hydroxy-3-methylbut-2-en-1-yl diphosphate synthase (flavodoxin) from Aliivibrio fischeri (strain ATCC 700601 / ES114) (Vibrio fischeri).